The chain runs to 2172 residues: Non-reducing polyketide synthase dpfgA (2172 aa).

Residues 74 to 181 (EWIKCGNSSL…LALCVGALVD (108 aa)) form an N-terminal acylcarrier protein transacylase domain (SAT) region. A Ketosynthase family 3 (KS3) domain is found at 389–783 (DDSIAIIGVS…GTNAAMLVCQ (395 aa)). Catalysis depends on for beta-ketoacyl synthase activity residues C529, H665, and H706. The interval 895–1197 (VFAGQTGRQA…SFHSILLQGQ (303 aa)) is malonyl-CoA:ACP transacylase (MAT) domain. The active-site For acyl/malonyl transferase activity is S981. An N-terminal hotdog fold region spans residues 1270–1403 (PELVSLAGPT…GTINWQGQGC (134 aa)). The PKS/mFAS DH domain occupies 1270–1581 (PELVSLAGPT…LKRIPIRSLQ (312 aa)). A product template (PT) domain region spans residues 1277-1575 (GPTDGETVEF…EIIGASLKRI (299 aa)). The tract at residues 1428–1581 (SASTVQGLFV…LKRIPIRSLQ (154 aa)) is C-terminal hotdog fold. 2 disordered regions span residues 1608-1631 (DSDS…HADF) and 1650-1672 (YPMD…VLSD). Residues 1650-1668 (YPMDSSSFSSAQPPSSASS) are compositionally biased toward low complexity. In terms of domain architecture, Carrier spans 1671–1747 (SDHDQESTAL…DLYRMVLNHD (77 aa)). S1707 carries the O-(pantetheine 4'-phosphoryl)serine modification. The disordered stretch occupies residues 1751–1773 (DRGSTVLSDKAPKSKSDSSLHGQ). Residues 1975 to 2155 (EFLHRVLSRL…DAGFIHVDWT (181 aa)) form a methyltransferase (CMeT) domain region.

Its pathway is secondary metabolite biosynthesis; terpenoid biosynthesis. Functionally, non-reducing polyketide synthase; part of the gene cluster that mediates the biosynthesis of diterpenoid pyrones. The first step of the pathway is the synthesis of the alpha-pyrone moiety by the polyketide synthase dpfgA via condensation of one acetyl-CoA starter unit with 3 malonyl-CoA units and 2 methylations. The alpha-pyrone is then combined with geranylgeranyl pyrophosphate (GGPP) formed by the GGPP synthase dpfgD through the action of the prenyltransferase dpfgC to yield a linear alpha-pyrone diterpenoid. Subsequent steps in the diterpenoid pyrone biosynthetic pathway involve the decalin core formation, which is initiated by the epoxidation of the C10-C11 olefin by the FAD-dependent oxidoreductase dpfgE, and is followed by a cyclization cascade catalyzed by the terpene cyclase dpfgB. The short chain dehydrogenase/reductase dpfgG then oxidizes the 8S hydroxy group to a ketone and the short chain dehydrogenase/reductase dpfgH reduces the ketone to the 8R hydroxy group to yield higginsianin B. Higginsianin B is further methylated by the methyltransferase dpfgI to produce the intermediate named FDDP B. The cytochrome P450 monooxygenase dfgpJ then catalyzes a three-step oxidation at C-27 to generate a carboxylic acid as well as C-26 hydroxylation. Finally, methyltransferase dpfgK methylates the carboxylic acid generated by dpfgJ, yielding the final diterpenoid pyrones from the pathway which were named FDDP D and FDDP E. The chain is Non-reducing polyketide synthase dpfgA from Gibberella zeae (strain ATCC MYA-4620 / CBS 123657 / FGSC 9075 / NRRL 31084 / PH-1) (Wheat head blight fungus).